Consider the following 409-residue polypeptide: Glycoprotein 55 (409 aa).

The N-terminal stretch at 1–32 is a signal peptide; that stretch reads MEGPASSKPLKDKTNPWGPLIILGILIRAGVS. Residues 33–384 are Virion surface-facing; it reads VQLDSPHQVS…SSNRSPWFTT (352 aa). 2 N-linked (GlcNAc...) asparagine; by host glycosylation sites follow: Asn-43 and Asn-58. The segment at 232 to 280 is disordered; it reads PIGSNPVTTDQLPLSRPVQTMPPRPLQPPPPGAASIVPETAPPPQQPGA. The segment covering 251–263 has biased composition (pro residues); it reads TMPPRPLQPPPPG. 2 N-linked (GlcNAc...) asparagine; by host glycosylation sites follow: Asn-296 and Asn-328. A helical membrane pass occupies residues 385 to 405; sequence LISAIMGSLIILLLLLILLIW. Over 406–409 the chain is Intravirion; sequence TLYS.

In terms of assembly, homooligomer. Forms heterooligomers with mouse EPOR, probably via their respective transmembrane domains. Forms covalent heterodimers with mouse MST1R isoform sf-Stk, probably via disulfide bonds.

The protein resides in the host endoplasmic reticulum membrane. The protein localises to the host cell membrane. Its subcellular location is the virion membrane. In terms of biological role, this envelope-like membrane glycoprotein is responsible for ligand-independent activation of the erythropoietin receptor EPOR leading to the abnormally rapid proliferation of erythroid precursor cells. In the first stage of Friend disease, constitutive activation of EPOR by gp55 causes uncontrolled, polyclonal proliferation of infected erythroblasts, leading to polycythemia (massive increase in the number of mature red cells). Host susceptibility to SSFV-induced erythroblastosis depends on the expression of the truncated isoform of MST1R receptor tyrosine kinase (MST1R isoform sf-Stk). Interaction with SSFV gp 55 results in constitutive tyrosine phosphorylation and activation of MST1R isoform sf-Stk. The protein is Glycoprotein 55 (env) of Mus musculus (Mouse).